The following is a 178-amino-acid chain: Large ribosomal subunit protein uL6 (178 aa).

Belongs to the universal ribosomal protein uL6 family. As to quaternary structure, part of the 50S ribosomal subunit.

This protein binds to the 23S rRNA, and is important in its secondary structure. It is located near the subunit interface in the base of the L7/L12 stalk, and near the tRNA binding site of the peptidyltransferase center. In Helicobacter pylori (strain G27), this protein is Large ribosomal subunit protein uL6.